The primary structure comprises 386 residues: MQMADLEKKLENSVLPPLLKRELSEKILREEISEEYLVDEIISETTRAYERTLVEPGEAVGVVAAQSIGEPGTQMTMRTFHYAGVAELNVTLGLPRMIEIVDARKEPSTPTMTIYLNDEFKGNREKAATVAKNIESTNVESVSEDISVDLVNECITIILNNQQLESRGLTVPDVIDAIKSKMKLKIEDHENVLNLKIKTPSLKALRKRLPKVRAIHLKGVQNIKRVIIRKEVDEYILYSEGSNIKEVFDIEGVDTTKTTTNNIVEIQDVLGIEAARNAIIYEMDATLGNQGLTVDKRHLMMVADLMCTDGVVKPIGRHGIGGEKASVLARAAFEETVKHLYSASMRGYVDELGGVVENIIVGKPISMGTGCIDICIDKSYEEGKEL.

The protein belongs to the RNA polymerase beta' chain family. Part of the RNA polymerase complex.

Its subcellular location is the cytoplasm. The enzyme catalyses RNA(n) + a ribonucleoside 5'-triphosphate = RNA(n+1) + diphosphate. Its function is as follows. DNA-dependent RNA polymerase (RNAP) catalyzes the transcription of DNA into RNA using the four ribonucleoside triphosphates as substrates. Forms part of the jaw domain. The sequence is that of DNA-directed RNA polymerase subunit Rpo1C from Methanococcus maripaludis (strain DSM 14266 / JCM 13030 / NBRC 101832 / S2 / LL).